The sequence spans 157 residues: Globin (157 aa).

Residue Gly1 is modified to N-acetylglycine. Residues 8-155 (SLSADQKAAI…MANIIDAEQK (148 aa)) enclose the Globin domain. The heme b site is built by His70 and His102.

The protein belongs to the globin family. As to quaternary structure, monomer.

In Nerita albicilla (Ox-palate nerite), this protein is Globin.